Reading from the N-terminus, the 55-residue chain is Large ribosomal subunit protein bL32 (55 aa).

Residues 1–23 (MAVPKKKTSKAKRDQRRAHWKRK) show a composition bias toward basic residues. Positions 1–26 (MAVPKKKTSKAKRDQRRAHWKRKATI) are disordered.

The protein belongs to the bacterial ribosomal protein bL32 family.

The sequence is that of Large ribosomal subunit protein bL32 from Picosynechococcus sp. (strain ATCC 27264 / PCC 7002 / PR-6) (Agmenellum quadruplicatum).